We begin with the raw amino-acid sequence, 170 residues long: Large ribosomal subunit protein uL11 (170 aa).

It belongs to the universal ribosomal protein uL11 family. As to quaternary structure, part of the ribosomal stalk of the 50S ribosomal subunit. Interacts with L10 and the large rRNA to form the base of the stalk. L10 forms an elongated spine to which L12 dimers bind in a sequential fashion forming a multimeric L10(L12)X complex.

Functionally, forms part of the ribosomal stalk which helps the ribosome interact with GTP-bound translation factors. This is Large ribosomal subunit protein uL11 from Saccharolobus islandicus (strain Y.N.15.51 / Yellowstone #2) (Sulfolobus islandicus).